The primary structure comprises 158 residues: NAD(P)H-quinone oxidoreductase subunit J, chloroplastic (158 aa).

Belongs to the complex I 30 kDa subunit family. NDH is composed of at least 16 different subunits, 5 of which are encoded in the nucleus.

It localises to the plastid. Its subcellular location is the chloroplast thylakoid membrane. It catalyses the reaction a plastoquinone + NADH + (n+1) H(+)(in) = a plastoquinol + NAD(+) + n H(+)(out). The catalysed reaction is a plastoquinone + NADPH + (n+1) H(+)(in) = a plastoquinol + NADP(+) + n H(+)(out). NDH shuttles electrons from NAD(P)H:plastoquinone, via FMN and iron-sulfur (Fe-S) centers, to quinones in the photosynthetic chain and possibly in a chloroplast respiratory chain. The immediate electron acceptor for the enzyme in this species is believed to be plastoquinone. Couples the redox reaction to proton translocation, and thus conserves the redox energy in a proton gradient. This Nuphar advena (Common spatterdock) protein is NAD(P)H-quinone oxidoreductase subunit J, chloroplastic.